Here is a 90-residue protein sequence, read N- to C-terminus: Guanine nucleotide-binding protein subunit gamma (90 aa).

Cys-86 carries the S-palmitoyl cysteine lipid modification. The residue at position 87 (Cys-87) is a Cysteine methyl ester. Cys-87 carries S-farnesyl cysteine lipidation. Positions 88–90 (CIM) are cleaved as a propeptide — removed in mature form.

Belongs to the G protein gamma family. G proteins are composed of 3 units, alpha, beta and gamma.

It is found in the membrane. The sequence is that of Guanine nucleotide-binding protein subunit gamma from Eremothecium gossypii (strain ATCC 10895 / CBS 109.51 / FGSC 9923 / NRRL Y-1056) (Yeast).